Here is a 150-residue protein sequence, read N- to C-terminus: Siroheme decarboxylase NirD subunit (150 aa).

Belongs to the Ahb/Nir family. As to quaternary structure, probably forms a complex composed of NirD, NirL, NirG and NirH. All proteins are required for the total conversion of siroheme to didecarboxysiroheme.

It catalyses the reaction siroheme + 2 H(+) = 12,18-didecarboxysiroheme + 2 CO2. The protein operates within porphyrin-containing compound metabolism. Functionally, involved in heme d1 biosynthesis. Catalyzes the decarboxylation of siroheme into didecarboxysiroheme. This is Siroheme decarboxylase NirD subunit from Pseudomonas aeruginosa (strain ATCC 15692 / DSM 22644 / CIP 104116 / JCM 14847 / LMG 12228 / 1C / PRS 101 / PAO1).